Consider the following 300-residue polypeptide: Transcription factor DUO1 (300 aa).

HTH myb-type domains are found at residues 8–64 (KEEI…RPNL) and 65–116 (KNGC…KRLA). 2 consecutive DNA-binding regions (H-T-H motif) follow at residues 36-60 (WSSI…VNKL) and 89-112 (WARI…SSRQ). Over residues 123–135 (SDASSSSFNPKSS) the composition is skewed to low complexity. A disordered region spans residues 123–145 (SDASSSSFNPKSSSSHRLKGKNV). The segment covering 136–145 (SSHRLKGKNV) has biased composition (basic residues).

Confined to inflorescences, especially in stamens and pollen.

It localises to the nucleus. Its function is as follows. Transcription activator that acts as a positive regulator of male germline development by promoting both gametic cell specification and cell cycle progression. Binds to canonical MYB sites 5'-AACCGTC-3', 5'-AAACCGC-3' and 5'-AACCGT-3' in promoters to trigger the expression of male germline-specific or enriched genes (e.g. MGH3, GEX2 and GCS1), including those required for fertilization. Required for sperm cell specification leading to pollen maturation by activating a germline-specific regulon. Involved in pollen mitosis entry at G2-M transition via the regulation of CYCB1-1, DAZ1 and DAZ2 expression. This chain is Transcription factor DUO1, found in Arabidopsis thaliana (Mouse-ear cress).